A 430-amino-acid chain; its full sequence is Histidine--tRNA ligase (430 aa).

Belongs to the class-II aminoacyl-tRNA synthetase family. In terms of assembly, homodimer.

It localises to the cytoplasm. The catalysed reaction is tRNA(His) + L-histidine + ATP = L-histidyl-tRNA(His) + AMP + diphosphate + H(+). The protein is Histidine--tRNA ligase of Acinetobacter baylyi (strain ATCC 33305 / BD413 / ADP1).